A 397-amino-acid chain; its full sequence is Homeobox protein knotted-1-like 2 (397 aa).

Disordered regions lie at residues 43–68, 172–191, and 233–276; these read TFHL…SPGT, FEAR…DPEL, and NNNA…PRAE. Over residues 49 to 58 the composition is skewed to gly residues; that stretch reads SGGGGGGGSG. In terms of domain architecture, ELK spans 279 to 299; sequence ELKNHLLRKYSGYLSSLKQEL. Positions 300–363 form a DNA-binding region, homeobox; TALE-type; it reads SKKKKKGKLP…NQRKRHWKPS (64 aa).

This sequence belongs to the TALE/KNOX homeobox family. As to expression, expressed only in the stems.

Its subcellular location is the nucleus. Probably binds to the DNA sequence 5'-TGAC-3'. The chain is Homeobox protein knotted-1-like 2 from Malus domestica (Apple).